Consider the following 295-residue polypeptide: Nucleotide-binding protein CMS1991 (295 aa).

ATP is bound at residue 19-26; the sequence is GMSGAGRS. A GTP-binding site is contributed by 70–73; the sequence is DVRG.

Belongs to the RapZ-like family.

In terms of biological role, displays ATPase and GTPase activities. The polypeptide is Nucleotide-binding protein CMS1991 (Clavibacter sepedonicus (Clavibacter michiganensis subsp. sepedonicus)).